Consider the following 562-residue polypeptide: Arginine--tRNA ligase (562 aa).

Positions 129-139 (ANPTGPLHVGH) match the 'HIGH' region motif.

This sequence belongs to the class-I aminoacyl-tRNA synthetase family. In terms of assembly, monomer.

The protein localises to the cytoplasm. It carries out the reaction tRNA(Arg) + L-arginine + ATP = L-arginyl-tRNA(Arg) + AMP + diphosphate. This is Arginine--tRNA ligase from Xanthomonas oryzae pv. oryzae (strain KACC10331 / KXO85).